The chain runs to 469 residues: 3-phosphoshikimate 1-carboxyvinyltransferase (469 aa).

A disordered region spans residues 21–45; it reads KDTILTHSDQPRPLQSRANGPLTGK. 3-phosphoshikimate is bound by residues lysine 52, serine 53, and arginine 57. Position 52 (lysine 52) interacts with phosphoenolpyruvate. 2 residues coordinate phosphoenolpyruvate: glycine 125 and arginine 153. 3-phosphoshikimate is bound by residues serine 199, glutamine 201, aspartate 352, and lysine 379. Residue glutamine 201 participates in phosphoenolpyruvate binding. Catalysis depends on aspartate 352, which acts as the Proton acceptor. The phosphoenolpyruvate site is built by arginine 383 and arginine 426.

This sequence belongs to the EPSP synthase family. Monomer.

The protein resides in the cytoplasm. The catalysed reaction is 3-phosphoshikimate + phosphoenolpyruvate = 5-O-(1-carboxyvinyl)-3-phosphoshikimate + phosphate. It participates in metabolic intermediate biosynthesis; chorismate biosynthesis; chorismate from D-erythrose 4-phosphate and phosphoenolpyruvate: step 6/7. Functionally, catalyzes the transfer of the enolpyruvyl moiety of phosphoenolpyruvate (PEP) to the 5-hydroxyl of shikimate-3-phosphate (S3P) to produce enolpyruvyl shikimate-3-phosphate and inorganic phosphate. The chain is 3-phosphoshikimate 1-carboxyvinyltransferase from Bradyrhizobium diazoefficiens (strain JCM 10833 / BCRC 13528 / IAM 13628 / NBRC 14792 / USDA 110).